Reading from the N-terminus, the 1984-residue chain is Sodium channel protein type 9 subunit alpha (1984 aa).

The Cytoplasmic segment spans residues 1–125; the sequence is MAMLPPPGPQ…RRISIKILVH (125 aa). Basic and acidic residues predominate over residues 26 to 39; sequence RISEEKAKGHKDEK. The interval 26 to 55 is disordered; that stretch reads RISEEKAKGHKDEKKDDEEEGPKPSSDLEA. The stretch at 112 to 410 is one I repeat; it reads FSPLRRISIK…VAMAYEEQNQ (299 aa). A helical transmembrane segment spans residues 126 to 145; that stretch reads SLFSMLIMCTILTNCIFMTM. Topologically, residues 146–150 are extracellular; that stretch reads SNPPD. A helical membrane pass occupies residues 151 to 172; sequence WTKNVEYTFTGIYTFESLIKIL. Residues 173-185 lie on the Cytoplasmic side of the membrane; it reads ARGFCVGEFTFLR. A helical membrane pass occupies residues 186–204; that stretch reads DPWNWLDFVVIVFAYLTEF. Topologically, residues 205-210 are extracellular; it reads VNLGNV. Residues 211-227 form a helical membrane-spanning segment; it reads SALRTFRVLRALKTISV. At 228–241 the chain is on the cytoplasmic side; that stretch reads IPGLKTIVGALIQS. A helical membrane pass occupies residues 242–267; it reads VKKLSDVMILTVFCLSVFALIGLQLF. The Extracellular portion of the chain corresponds to 268–346; it reads MGNLKHKCFR…PDYGYTSFDT (79 aa). The cysteines at positions 275 and 324 are disulfide-linked. Residues 347–363 constitute an intramembrane region (pore-forming); sequence FGWAFLALFRLMTQDYW. Over 364–376 the chain is Extracellular; sequence ENLYQQTLRAAGK. Residues 377-402 form a helical membrane-spanning segment; sequence TYMIFFVVVIFLGSFYLINLILAVVA. A coiled-coil region spans residues 402–449; sequence AMAYEEQNQANIEEAKQKELEFQQMLDRLKKEQEEAEAIAAAAAEYTS. Residues 403–744 are Cytoplasmic-facing; sequence MAYEEQNQAN…FIYFIVMDPF (342 aa). Over residues 458-471 the composition is skewed to low complexity; the sequence is LSESSSETSRLSSK. Disordered regions lie at residues 458–540 and 574–609; these read LSES…SIRG and HSIF…RSPP. The segment covering 474 to 486 has biased composition (basic residues); that stretch reads KERRNRRKKKKQK. 2 stretches are compositionally biased toward basic and acidic residues: residues 489–509 and 574–584; these read SGEE…ESIR and HSIFGDNESRR. The stretch at 684-708 forms a coiled coil; sequence LRQRAMSRASILTNTVEELEESRQK. An II repeat occupies 725 to 988; it reads CSPYWIKFKK…EEDTDANNLQ (264 aa). A helical transmembrane segment spans residues 745–761; sequence VDLAITICIVLNTLFMA. The Extracellular segment spans residues 762–770; it reads MEHHPMTDE. The helical transmembrane segment at 771–795 threads the bilayer; it reads FKNVLAVGNLVFTGIFAAEMVLKLI. The Cytoplasmic portion of the chain corresponds to 796–804; sequence AMDPYEYFQ. A helical transmembrane segment spans residues 805 to 821; it reads VGWNIFDSLIVTLSLVE. Residues 822-830 are Extracellular-facing; it reads LFLADVEGL. The helical transmembrane segment at 831–847 threads the bilayer; sequence SVLRSFRLLRVFKLAKS. The Cytoplasmic segment spans residues 848–864; that stretch reads WPTLNMLIKIIGNSVGA. Residues 865 to 887 traverse the membrane as a helical segment; it reads LGNLTLVLAIIVFIFAVVGMQLF. Over 888 to 914 the chain is Extracellular; sequence GKSYKECVCKINENCKLPRWHMNDFFH. The cysteines at positions 896 and 902 are disulfide-linked. The pore-forming intramembrane region spans 915–927; the sequence is SFLIVFRVLCGEW. Residues 928-939 lie on the Extracellular side of the membrane; the sequence is IETMWDCMEVAG. The cysteines at positions 934 and 943 are disulfide-linked. A helical membrane pass occupies residues 940–966; sequence QTMCLIVYMMVMVIGNLVVLNLFLALL. Over 967–1185 the chain is Cytoplasmic; that stretch reads LSSFSSDNLT…WWTIRKTCYR (219 aa). Disordered stretches follow at residues 1015 to 1039 and 1089 to 1145; these read KKPK…YISN and PIAP…EPIN. The segment covering 1019–1035 has biased composition (basic and acidic residues); it reads GSKDTKRTADPNNKREN. A compositionally biased stretch (acidic residues) spans 1135–1145; the sequence is GEEEAEAEPIN. One copy of the III repeat lies at 1178–1486; it reads TIRKTCYRIV…KKYYNAMKKL (309 aa). Residues 1186–1210 traverse the membrane as a helical segment; the sequence is IVEHSWFESFIVLMILLSSGALAFE. Residues 1211-1222 are Extracellular-facing; it reads DIYIEKKKTIKI. A helical transmembrane segment spans residues 1223-1248; that stretch reads ILEYADKIFTYIFILEMLLKWVAYGY. Residues 1249 to 1250 are Cytoplasmic-facing; sequence KT. A helical membrane pass occupies residues 1251-1276; it reads YFTNAWCWLDFLIVDVSLVTLVANTL. The Extracellular portion of the chain corresponds to 1277-1285; it reads GYSDLGPIK. Residues 1286–1302 form a helical membrane-spanning segment; the sequence is SLRTLRALRPLRALSRF. Over 1303 to 1315 the chain is Cytoplasmic; that stretch reads EGMRVVVNALIGA. A helical membrane pass occupies residues 1316–1340; sequence IPSIMNVLLVCLIFWLIFSIMGVNL. The Extracellular segment spans residues 1341-1392; the sequence is FAGKFYECVNTTDGSRFSVSQVANRSECFALMNVSGNVRWKNLKVNFDNVGL. Cysteines 1348 and 1368 form a disulfide. The pore-forming intramembrane region spans 1393 to 1403; that stretch reads GYLSLLQVATF. Over 1404 to 1429 the chain is Extracellular; it reads KGWMDIMYAAVDSVNVNAQPIYEYNL. A helical transmembrane segment spans residues 1430–1455; that stretch reads YMYIYFVIFIIFGSFFTLNLFIGVII. Topologically, residues 1456 to 1512 are cytoplasmic; that stretch reads DNFNQQKKKLGGQDIFMTEEQKKYYNAMKKLGSKKPQKPIPRPGNKFQGCIFDLVTN. Position 1488 is a phosphoserine; by PKC (Ser1488). One copy of the IV repeat lies at 1495–1793; that stretch reads IPRPGNKFQG…WEKFDPDATQ (299 aa). Residues 1513–1532 form a helical membrane-spanning segment; that stretch reads QAFDITIMVLICLNMVTMMV. The Extracellular segment spans residues 1533–1543; that stretch reads EKEGQTDYMSF. The chain crosses the membrane as a helical span at residues 1544–1565; that stretch reads VLYWINVVFIILFTGECVLKLI. The Cytoplasmic portion of the chain corresponds to 1566-1574; the sequence is SLRHYYFTV. A helical membrane pass occupies residues 1575–1596; that stretch reads GWNIFDFVVVILSIVGMFLAEM. At 1597–1605 the chain is on the extracellular side; the sequence is IEKYFVSPT. Residues 1606 to 1625 traverse the membrane as a helical segment; the sequence is LFRVIRLARIGRILRLIKGA. Residues 1626-1638 lie on the Cytoplasmic side of the membrane; the sequence is KGIRTLLFALMMS. A helical membrane pass occupies residues 1639–1661; the sequence is LPALFNIGLLLFLVMFIYAIFGM. Topologically, residues 1662–1684 are extracellular; that stretch reads SNFAYVKKEAGINDMFNFETFGN. An intramembrane region (pore-forming) is located at residues 1685-1697; the sequence is SMICLFQITTSAG. Over 1698-1731 the chain is Extracellular; that stretch reads WDGLLAPILNSAPPDCDPKKVHPGSSVEGDCGNP. Cys1713 and Cys1728 are joined by a disulfide. The helical transmembrane segment at 1732 to 1757 threads the bilayer; sequence SVGIFYFVSYIIISFLVVVNMYIAVI. The Cytoplasmic portion of the chain corresponds to 1758–1984; it reads LENFSVATEE…EDKEKDESRK (227 aa). An IQ domain is found at 1887–1916; sequence EDVSATIIQRAYRRYRLRQNVKNISSIYIK. A disordered region spans residues 1933–1984; the sequence is DNVNENSSPEKTDATASTISPPSYDSVTKPDQEKYETDKTEKEDKEKDESRK. Over residues 1946 to 1958 the composition is skewed to polar residues; sequence ATASTISPPSYDS. The span at 1960-1984 shows a compositional bias: basic and acidic residues; the sequence is TKPDQEKYETDKTEKEDKEKDESRK.

It belongs to the sodium channel (TC 1.A.1.10) family. Nav1.7/SCN9A subfamily. In terms of assembly, the Nav1.7 voltage-gated sodium channel consists of an ion-conducting alpha subunit SCN9A which is functional on its own regulated by one or more beta-1 (SCN1B), beta-2 (SCN2B), beta-3 (SCN3B) and beta-4 (SCN4B) subunits. SCN1B and SCN3B are non-covalently associated with SCN9A. SCN2B and SCN4B are disulfide-linked to SCN9A. SCN1B regulates channel inactivation. Interacts with NEDD4 and NEDD4L; regulates Nav1.7 activity most probably through ubiquitination and subsequent endocytosis. Interacts with TMEM233; modulates the gating properties of NaV1.7. Ubiquitinated by NEDD4L; which may promote its endocytosis. In terms of processing, phosphorylation at Ser-1488 by PKC in a highly conserved cytoplasmic loop increases peak sodium currents. As to expression, expressed strongly in sciatic nerves, with moderate levels in kidney. Not detected in liver, brain and muscle.

The protein resides in the cell membrane. It localises to the cell projection. The protein localises to the neuron projection. Its subcellular location is the axon. It carries out the reaction Na(+)(in) = Na(+)(out). Functionally, pore-forming subunit of Nav1.7, a voltage-gated sodium (Nav) channel that directly mediates the depolarizing phase of action potentials in excitable membranes. Navs, also called VGSCs (voltage-gated sodium channels) or VDSCs (voltage-dependent sodium channels), operate by switching between closed and open conformations depending on the voltage difference across the membrane. In the open conformation they allow Na(+) ions to selectively pass through the pore, along their electrochemical gradient. The influx of Na(+) ions provokes membrane depolarization, initiating the propagation of electrical signals throughout cells and tissues. Nav1.7 plays a crucial role in controlling the excitability and action potential propagation from nociceptor neurons, thereby contributing to the sensory perception of pain. The chain is Sodium channel protein type 9 subunit alpha from Mus musculus (Mouse).